Here is a 790-residue protein sequence, read N- to C-terminus: MYKSLLFCLKIFVFLILVGCGITAYIIYHYSRDLPDYSQLARYYPPSVTRIYSRDGKLMEEYAFERRVFVPINSVPSSLIESFIAAEDKNFYNHPGVDLFGIVRAAFLNISNYLHHRRMEGASTITQQVVKNFLLTNEVSLERKIKEAILSYMISRVFTKDQILELYLNQTFFGRGAYGVAVAAQNYFNKSVEELTIAESAFIAALPKAPSELNPERNYARVKARRDYVITRMFEDGYITRDAAKEAMDSPIVLRKRAKEETVTADYYAAQVREEVIRMLNSKEVFYTGGLTIITSLDAKMQQLAENSLRKGLREFDRRCGFRKPIANISLDNWQGELKKLPTPPSLLEYKLAVVLDVADNHVEIGLIDGSKSKMPIAEMKWARSNFKSVKTLLKKGDVIVVEAIKEGYALRQIPEVNGAIMVMNPNTGQVLASVGGYDFSTSKFDRVTQALRQPGSLSKTFVYLAALENGVKPNQIFNDGPIEISQGPGMPSWRPKNYEGKFLGEITMRTGLEKSRNLITVRVATAVGLTKIVDIIKRFGINNEPKKVYSMVLGSIETTLSRMTNAYAIIANGGKKVEPHFVELIKDRNGKIIYRRDDRECLACNVSDSNLDTAILEIPKEYIYRVTDEASDYQITSFLTGAIDRGTGYAAKKLGKIIGGKTGTSNDSKDTWFVGFTPKIVVGSYVGYDTPKELGKRATGSNVVLPIFIDFMSNAYKDKPSLPFKVPDSIKLIAVDSATGKITPGGTVIEAFKVNNVQMLENEDMIDNQDNNDIFDYVPSKEDQSQEIY.

Topologically, residues 1–6 (MYKSLL) are cytoplasmic. A helical; Signal-anchor for type II membrane protein transmembrane segment spans residues 7–27 (FCLKIFVFLILVGCGITAYII). At 28 to 790 (YHYSRDLPDY…SKEDQSQEIY (763 aa)) the chain is on the periplasmic side. Positions 49–220 (TRIYSRDGKL…SELNPERNYA (172 aa)) are transglycosylase. E87 functions as the Proton donor; for transglycosylase activity in the catalytic mechanism. The interval 398–711 (DVIVVEAIKE…SNVVLPIFID (314 aa)) is transpeptidase. The Acyl-ester intermediate; for transpeptidase activity role is filled by S457.

The protein in the N-terminal section; belongs to the glycosyltransferase 51 family. It in the C-terminal section; belongs to the transpeptidase family.

It is found in the cell inner membrane. It catalyses the reaction [GlcNAc-(1-&gt;4)-Mur2Ac(oyl-L-Ala-gamma-D-Glu-L-Lys-D-Ala-D-Ala)](n)-di-trans,octa-cis-undecaprenyl diphosphate + beta-D-GlcNAc-(1-&gt;4)-Mur2Ac(oyl-L-Ala-gamma-D-Glu-L-Lys-D-Ala-D-Ala)-di-trans,octa-cis-undecaprenyl diphosphate = [GlcNAc-(1-&gt;4)-Mur2Ac(oyl-L-Ala-gamma-D-Glu-L-Lys-D-Ala-D-Ala)](n+1)-di-trans,octa-cis-undecaprenyl diphosphate + di-trans,octa-cis-undecaprenyl diphosphate + H(+). The catalysed reaction is Preferential cleavage: (Ac)2-L-Lys-D-Ala-|-D-Ala. Also transpeptidation of peptidyl-alanyl moieties that are N-acyl substituents of D-alanine.. It participates in cell wall biogenesis; peptidoglycan biosynthesis. Cell wall formation. Synthesis of cross-linked peptidoglycan from the lipid intermediates. The enzyme has a penicillin-insensitive transglycosylase N-terminal domain (formation of linear glycan strands) and a penicillin-sensitive transpeptidase C-terminal domain (cross-linking of the peptide subunits). In Rickettsia conorii (strain ATCC VR-613 / Malish 7), this protein is Penicillin-binding protein 1A (mrcA).